The primary structure comprises 426 residues: Selenocysteine lyase (426 aa).

Position 239 is an N6-(pyridoxal phosphate)lysine (lysine 239). The active-site S-selanylcysteine intermediate is the cysteine 367.

The protein belongs to the class-V pyridoxal-phosphate-dependent aminotransferase family. As to quaternary structure, homodimer. Pyridoxal 5'-phosphate is required as a cofactor.

It localises to the cytoplasm. It is found in the cytosol. The enzyme catalyses L-selenocysteine + AH2 = hydrogenselenide + L-alanine + A + H(+). In terms of biological role, catalyzes the decomposition of L-selenocysteine to L-alanine and elemental selenium. The chain is Selenocysteine lyase (scly) from Xenopus laevis (African clawed frog).